Consider the following 188-residue polypeptide: Methylated-DNA--protein-cysteine methyltransferase (188 aa).

The DNA site is built by tyrosine 120, glycine 121, and arginine 134. Residue cysteine 151 is the Nucleophile; methyl group acceptor of the active site. Serine 157 serves as a coordination point for DNA.

This sequence belongs to the MGMT family.

It is found in the nucleus. It carries out the reaction a 6-O-methyl-2'-deoxyguanosine in DNA + L-cysteinyl-[protein] = S-methyl-L-cysteinyl-[protein] + a 2'-deoxyguanosine in DNA. The enzyme catalyses a 4-O-methyl-thymidine in DNA + L-cysteinyl-[protein] = a thymidine in DNA + S-methyl-L-cysteinyl-[protein]. Its function is as follows. Involved in the cellular defense against the biological effects of O6-methylguanine (O6-MeG) and O4-methylthymine (O4-MeT) in DNA. Repairs the methylated nucleobase in DNA by stoichiometrically transferring the methyl group to a cysteine residue in the enzyme. This is a suicide reaction: the enzyme is irreversibly inactivated. Prefers double-stranded DNA over single-stranded DNA as substrate. The chain is Methylated-DNA--protein-cysteine methyltransferase (MGT1) from Saccharomyces cerevisiae (strain YJM789) (Baker's yeast).